Here is a 199-residue protein sequence, read N- to C-terminus: Carbon disulfide hydrolase (199 aa).

Residues Cys-36, His-91, and Cys-94 each coordinate Zn(2+).

The protein belongs to the beta-class carbonic anhydrase family. As to quaternary structure, exists as both octamers and hexadecamers in solution. The hexadecameric homooligomer may form a catenane, through interactions of two interlocked octameric rings. Requires Zn(2+) as cofactor.

It carries out the reaction carbon disulfide + 2 H2O = 2 hydrogen sulfide + CO2 + 2 H(+). It functions in the pathway sulfur metabolism; hydrogen sulfide biosynthesis. Functionally, catalyzes the conversion of carbon disulfide into hydrogen sulfide and carbon dioxide, with carbonyl sulfide as an intermediate. Likely plays a key role in sulfur metabolism that allows A.thiooxidans G8 to grow on carbon disulfide as the main carbon and energy source. Does not show carbonic anhydrase activity (hydration of CO(2) to carbonate). This Acidithiobacillus thiooxidans (Thiobacillus thiooxidans) protein is Carbon disulfide hydrolase.